A 501-amino-acid chain; its full sequence is Galactokinase (501 aa).

The alpha-D-galactose site is built by R54, E60, H61, and D63. G158, G160, S162, and S163 together coordinate ATP. D207 lines the alpha-D-galactose pocket. The active-site Proton acceptor is D207. Residues S250 and K252 each contribute to the ATP site. Y260 serves as a coordination point for alpha-D-galactose.

The protein belongs to the GHMP kinase family. GalK subfamily.

It catalyses the reaction alpha-D-galactose + ATP = alpha-D-galactose 1-phosphate + ADP + H(+). It functions in the pathway carbohydrate metabolism; galactose metabolism. This is Galactokinase (galK) from Dictyostelium discoideum (Social amoeba).